Here is a 127-residue protein sequence, read N- to C-terminus: Large ribosomal subunit protein eL32 (127 aa).

Basic and acidic residues predominate over residues 37–48 (KWRKPKGTDSKM). A disordered region spans residues 37–65 (KWRKPKGTDSKMRVKLKGKARSPSIGWSS).

It belongs to the eukaryotic ribosomal protein eL32 family.

The protein is Large ribosomal subunit protein eL32 of Thermococcus sibiricus (strain DSM 12597 / MM 739).